We begin with the raw amino-acid sequence, 240 residues long: Superoxide dismutase [Cu-Zn] (240 aa).

The N-terminal stretch at 1-32 (MPKPADHRNHAAVSTSVLSALFLGAGAALLSA) is a signal peptide. The N-palmitoyl cysteine moiety is linked to residue Cys-33. A lipid anchor (S-diacylglycerol cysteine) is attached at Cys-33. Composition is skewed to polar residues over residues 36–51 (PQHA…SIWT) and 68–77 (GAQSLTSTLT). Residues 36–77 (PQHASTVPGTTPSIWTGSPAPSGLSGHDEESPGAQSLTSTLT) form a disordered region. Residues His-116 and His-118 each contribute to the Cu cation site. Residues Cys-123 and Cys-234 are joined by a disulfide bond. Zn(2+) is bound by residues His-146 and Asp-158. Residue His-195 coordinates Cu cation.

It belongs to the Cu-Zn superoxide dismutase family. Cu cation is required as a cofactor. The cofactor is Zn(2+).

The protein localises to the cell membrane. It carries out the reaction 2 superoxide + 2 H(+) = H2O2 + O2. With respect to regulation, inhibited by the copper chelator diethyl dithiocarbamate. Its function is as follows. Destroys radicals which are normally produced within the cells and which are toxic to biological systems. May play a role in favoring mycobacterial survival in phagocytes. The polypeptide is Superoxide dismutase [Cu-Zn] (sodC) (Mycobacterium bovis (strain ATCC BAA-935 / AF2122/97)).